The primary structure comprises 89 residues: U-scoloptoxin(11)-Sm4a (89 aa).

The first 17 residues, 1-17 (MFFKLVLVSAVAIQALS), serve as a signal peptide directing secretion.

Belongs to the scoloptoxin-11 family. In terms of processing, contains 3 disulfide bonds. In terms of tissue distribution, expressed by the venom gland.

It is found in the secreted. The chain is U-scoloptoxin(11)-Sm4a from Scolopendra morsitans (Tanzanian blue ringleg centipede).